Consider the following 338-residue polypeptide: DNA-directed RNA polymerase subunit alpha (338 aa).

The alpha N-terminal domain (alpha-NTD) stretch occupies residues 1-234; it reads MIERNWNELI…DQLQIFITFE (234 aa). The alpha C-terminal domain (alpha-CTD) stretch occupies residues 250 to 338; sequence FNPALLKKVD…DLAKKFEDQI (89 aa).

This sequence belongs to the RNA polymerase alpha chain family. As to quaternary structure, homodimer. The RNAP catalytic core consists of 2 alpha, 1 beta, 1 beta' and 1 omega subunit. When a sigma factor is associated with the core the holoenzyme is formed, which can initiate transcription.

It carries out the reaction RNA(n) + a ribonucleoside 5'-triphosphate = RNA(n+1) + diphosphate. DNA-dependent RNA polymerase catalyzes the transcription of DNA into RNA using the four ribonucleoside triphosphates as substrates. This Caulobacter sp. (strain K31) protein is DNA-directed RNA polymerase subunit alpha.